The sequence spans 737 residues: Polyribonucleotide nucleotidyltransferase (737 aa).

The Mg(2+) site is built by aspartate 489 and aspartate 495. One can recognise a KH domain in the interval 556–615 (PKIDTIKIDVDKIKIVIGKGGETIDKIIAETGVKIDIDEEGNVSIYSSDQDAINRAKEII). The 69-residue stretch at 625-693 (DEVYRAKVVR…EKGRIDASMK (69 aa)) folds into the S1 motif domain. The disordered stretch occupies residues 691–737 (SMKALLPRPPKPEHDEKGEKSERPHRPRHHKDHKPKKEFTETPKDSE). The segment covering 700-714 (PKPEHDEKGEKSERP) has biased composition (basic and acidic residues). Basic residues predominate over residues 715-724 (HRPRHHKDHK). The span at 725 to 737 (PKKEFTETPKDSE) shows a compositional bias: basic and acidic residues.

It belongs to the polyribonucleotide nucleotidyltransferase family. Mg(2+) is required as a cofactor.

The protein resides in the cytoplasm. The enzyme catalyses RNA(n+1) + phosphate = RNA(n) + a ribonucleoside 5'-diphosphate. Functionally, involved in mRNA degradation. Catalyzes the phosphorolysis of single-stranded polyribonucleotides processively in the 3'- to 5'-direction. The protein is Polyribonucleotide nucleotidyltransferase of Streptococcus pneumoniae (strain ATCC 700669 / Spain 23F-1).